Here is a 784-residue protein sequence, read N- to C-terminus: Toll-like receptor 2 (784 aa).

The first 20 residues, Met-1–Gly-20, serve as a signal peptide directing secretion. Topologically, residues Ala-21–Arg-587 are extracellular. Residues Cys-30 and Cys-36 are joined by a disulfide bond. LRR repeat units lie at residues Val-54–Asn-77, Leu-78–Asn-101, Leu-102–Val-125, Leu-126–Asn-150, Leu-151–Phe-175, Leu-176–Asn-199, Ile-200–Ser-223, Leu-224–Ser-250, Val-251–Gly-278, Ile-279–Asn-308, Val-309–Arg-337, Val-338–Ser-361, Leu-362–Phe-388, Leu-389–Asn-414, Leu-415–Lys-437, Met-438–Gln-457, Thr-458–Gln-478, Leu-479–Val-500, and Leu-501–Gln-524. Residue Asn-114 is glycosylated (N-linked (GlcNAc...) asparagine). The N-linked (GlcNAc...) asparagine glycan is linked to Asn-199. Cys-353 and Cys-382 are disulfide-bonded. Cys-432 and Cys-454 are joined by a disulfide. The N-linked (GlcNAc...) asparagine glycan is linked to Asn-442. The LRRCT domain maps to Leu-525 to Arg-579. Residues Ala-588–Leu-608 form a helical membrane-spanning segment. Over Cys-609 to Ser-784 the chain is Cytoplasmic. The 144-residue stretch at Ile-639 to Ile-782 folds into the TIR domain. Lys-754 is covalently cross-linked (Glycyl lysine isopeptide (Lys-Gly) (interchain with G-Cter in ubiquitin)). Positions Tyr-761 to Leu-778 match the ATG16L1-binding motif motif.

The protein belongs to the Toll-like receptor family. Interacts with LY96, TLR1 and TLR6 (via extracellular domain). TLR2 seems to exist in heterodimers with either TLR1 or TLR6 before stimulation by the ligand. The heterodimers form bigger oligomers in response to their corresponding ligands as well as further heterotypic associations with other receptors such as CD14 and/or CD36. Binds MYD88 (via TIR domain). Interacts with TICAM1. Interacts with CNPY3. Interacts with ATG16L1. Interacts with PPP1R11. Interacts with TICAM2. Interacts with TIRAP. Post-translationally, ubiquitinated at Lys-754 by PPP1R11, leading to its degradation. Deubiquitinated by USP2. In terms of processing, glycosylation of Asn-442 is critical for secretion of the N-terminal ectodomain of TLR2.

It is found in the membrane. Its subcellular location is the cytoplasmic vesicle. It localises to the phagosome membrane. The protein resides in the membrane raft. In terms of biological role, cooperates with LY96 to mediate the innate immune response to bacterial lipoproteins and other microbial cell wall components. Cooperates with TLR1 or TLR6 to mediate the innate immune response to bacterial lipoproteins or lipopeptides. Acts via MYD88 and TRAF6, leading to NF-kappa-B activation, cytokine secretion and the inflammatory response. May also promote apoptosis in response to lipoproteins. Forms activation clusters composed of several receptors depending on the ligand, these clusters trigger signaling from the cell surface and subsequently are targeted to the Golgi in a lipid-raft dependent pathway. Forms the cluster TLR2:TLR6:CD14:CD36 in response to diacylated lipopeptides and TLR2:TLR1:CD14 in response to triacylated lipopeptides. The chain is Toll-like receptor 2 (TLR2) from Bos taurus (Bovine).